A 110-amino-acid chain; its full sequence is U32-theraphotoxin-Cg1a (110 aa).

The first 19 residues, 1-19 (MNHCFLILFTLIVFTVVWS), serve as a signal peptide directing secretion. The propeptide occupies 20-43 (LEENEEYPDEDEMIESFMDGYSYR). 4 disulfides stabilise this stretch: Cys-49/Cys-63, Cys-56/Cys-69, Cys-60/Cys-105, and Cys-62/Cys-80.

It belongs to the neurotoxin 03 (Tx2) family. 02 subfamily. Expressed by the venom gland.

It localises to the secreted. Its function is as follows. Probable ion channel inhibitor. In Chilobrachys guangxiensis (Chinese earth tiger tarantula), this protein is U32-theraphotoxin-Cg1a.